Consider the following 326-residue polypeptide: uncharacterized protein (326 aa).

Belongs to the ParB family.

This is an uncharacterized protein from Acidianus two-tailed virus (ATV).